The sequence spans 353 residues: MAIDENKQKALAAALGQIEKQFGKGSIMRLGEDRSMDVETISTGSLSLDIALGAGGLPMGRIVEIYGPESSGKTTLTLQVIAAAQREGKTCAFIDAEHALDPVYARKLGVDIDNLLCSQPDTGEQALEICDALARSGAVDVIVVDSVAALTPKAEIEGEIGDSHMGLAARMMSQAMRKLAGNLKQSNTLLIFINQIRMKIGVMFGNPETTTGGNALKFYASVRLDIRRIGAVKEGDNVVGSETRVKVVKNKIAAPFKQAEFQILYGEGINFYGELVDLGVKEKLIEKAGAWYSYNGEKIGQGKANATTWLKENPATAKEIEKRVRELLLSNQNATPDFAVDDSEGVAETNEDF.

Glycine 67–threonine 74 lines the ATP pocket.

This sequence belongs to the RecA family.

It localises to the cytoplasm. Can catalyze the hydrolysis of ATP in the presence of single-stranded DNA, the ATP-dependent uptake of single-stranded DNA by duplex DNA, and the ATP-dependent hybridization of homologous single-stranded DNAs. It interacts with LexA causing its activation and leading to its autocatalytic cleavage. This Salmonella agona (strain SL483) protein is Protein RecA.